A 507-amino-acid chain; its full sequence is Dolichyl pyrophosphate Man9GlcNAc2 alpha-1,3-glucosyltransferase (507 aa).

The Cytoplasmic portion of the chain corresponds to 1–2; that stretch reads ME. A helical transmembrane segment spans residues 3–23; that stretch reads SWTWMTVVVLLGLTVRWTVSL. Residues 24–114 lie on the Lumenal side of the membrane; that stretch reads NSYSGAGKPP…SQAHKLFMRT (91 aa). Asparagine 59 carries N-linked (GlcNAc...) asparagine glycosylation. The chain crosses the membrane as a helical span at residues 115–135; it reads TVLAADLLIYIPAVLLYCYSL. Topologically, residues 136-143 are cytoplasmic; sequence KEISPKRK. Residues 144-164 form a helical membrane-spanning segment; that stretch reads IASALCILLYPGLILIDYGHF. Over 165 to 172 the chain is Lumenal; that stretch reads QYNSVSLG. A helical transmembrane segment spans residues 173 to 193; the sequence is FALWGVLGVSCDWDLLGSLAF. The Cytoplasmic segment spans residues 194 to 229; sequence CLALNYKQMELYHSLPFFCFLLGKCFKKGLRGKGSA. Residues 230–250 traverse the membrane as a helical segment; it reads LFIRIACTVVASFLLCWLPFL. The Lumenal segment spans residues 251–297; that stretch reads TEREHALQVVRRLFPVDRGLFEDKVANIWCSLNVFLKIKDILPRHIQ. A helical membrane pass occupies residues 298–318; the sequence is IAISFCFTFLSLLPACIKLTV. Residues 319-332 are Cytoplasmic-facing; it reads QPSAKGFRFTLVSC. Residues 333-353 traverse the membrane as a helical segment; it reads ALSFFLFSFQVHEKSILLVSL. At 354–361 the chain is on the lumenal side; sequence PVCLVLTE. Residues 362-382 form a helical membrane-spanning segment; it reads IPFMSTWFLLVSTFSMLPLLL. The Cytoplasmic portion of the chain corresponds to 383–385; it reads KDQ. A helical transmembrane segment spans residues 386–406; it reads LLLPSVVTVMAFLIACSTFFP. Over 407–437 the chain is Lumenal; sequence MFENTSEEQLQLKSFAVSVRRHLPGFTFLPR. Residues 438–458 form a helical membrane-spanning segment; sequence IIQCLFLSSVITMILLTILSV. Over 459–468 the chain is Cytoplasmic; sequence TLDPPQKLPD. A helical membrane pass occupies residues 469-489; the sequence is LFSVLICFVSCVNFVFFLVYF. The Lumenal segment spans residues 490–507; sequence NIVIMWDSKNGRNRKKID.

Belongs to the ALG6/ALG8 glucosyltransferase family.

Its subcellular location is the endoplasmic reticulum membrane. The catalysed reaction is an alpha-D-Man-(1-&gt;2)-alpha-D-Man-(1-&gt;2)-alpha-D-Man-(1-&gt;3)-[alpha-D-Man-(1-&gt;2)-alpha-D-Man-(1-&gt;3)-[alpha-D-Man-(1-&gt;2)-alpha-D-Man-(1-&gt;6)]-alpha-D-Man-(1-&gt;6)]-beta-D-Man-(1-&gt;4)-beta-D-GlcNAc-(1-&gt;4)-alpha-D-GlcNAc-diphospho-di-trans,poly-cis-dolichol + a di-trans,poly-cis-dolichyl beta-D-glucosyl phosphate = an alpha-D-Glc-(1-&gt;3)-alpha-D-Man-(1-&gt;2)-alpha-D-Man-(1-&gt;2)-alpha-D-Man-(1-&gt;3)-[alpha-D-Man-(1-&gt;2)-alpha-D-Man-(1-&gt;3)-[alpha-D-Man-(1-&gt;2)-alpha-D-Man-(1-&gt;6)]-alpha-D-Man-(1-&gt;6)]-beta-D-Man-(1-&gt;4)-beta-D-GlcNAc-(1-&gt;4)-alpha-D-GlcNAc-diphospho-di-trans,poly-cis-dolichol + a di-trans,poly-cis-dolichyl phosphate + H(+). It functions in the pathway protein modification; protein glycosylation. Its function is as follows. Dolichyl pyrophosphate Man9GlcNAc2 alpha-1,3-glucosyltransferase that operates in the biosynthetic pathway of dolichol-linked oligosaccharides, the glycan precursors employed in protein asparagine (N)-glycosylation. The assembly of dolichol-linked oligosaccharides begins on the cytosolic side of the endoplasmic reticulum membrane and finishes in its lumen. The sequential addition of sugars to dolichol pyrophosphate produces dolichol-linked oligosaccharides containing fourteen sugars, including two GlcNAcs, nine mannoses and three glucoses. Once assembled, the oligosaccharide is transferred from the lipid to nascent proteins by oligosaccharyltransferases. In the lumen of the endoplasmic reticulum, adds the first glucose residue from dolichyl phosphate glucose (Dol-P-Glc) onto the lipid-linked oligosaccharide intermediate Man(9)GlcNAc(2)-PP-Dol to produce Glc(1)Man(9)GlcNAc(2)-PP-Dol. Glc(1)Man(9)GlcNAc(2)-PP-Dol is a substrate for ALG8, the following enzyme in the biosynthetic pathway. This is Dolichyl pyrophosphate Man9GlcNAc2 alpha-1,3-glucosyltransferase from Rattus norvegicus (Rat).